Reading from the N-terminus, the 428-residue chain is Nuclear hormone receptor family member nhr-44 (428 aa).

The segment at residues 21–98 (SEKCLVCFQP…LGMKPDNIQR (78 aa)) is a DNA-binding region (nuclear receptor). 2 consecutive NR C4-type zinc fingers follow at residues 24–44 (CLVCFQPSHGNHFGVDSCRAC) and 61–86 (CREGDNKCTPDEWGRWSCKRCRSDKC). The 247-residue stretch at 181–427 (SLEQLAFGLQ…LSHPEMFQFS (247 aa)) folds into the NR LBD domain.

The protein belongs to the nuclear hormone receptor family.

The protein resides in the nucleus. Functionally, orphan nuclear receptor. In Caenorhabditis elegans, this protein is Nuclear hormone receptor family member nhr-44 (nhr-44).